We begin with the raw amino-acid sequence, 632 residues long: tRNA uridine 5-carboxymethylaminomethyl modification enzyme MnmG (632 aa).

FAD-binding positions include 15 to 20 (GAGHAG), Ile-127, and Ser-182. Position 276–290 (276–290 (GPRYCPSIEDKIVRF)) interacts with NAD(+). Gln-373 is a binding site for FAD.

It belongs to the MnmG family. In terms of assembly, homodimer. Heterotetramer of two MnmE and two MnmG subunits. It depends on FAD as a cofactor.

The protein localises to the cytoplasm. NAD-binding protein involved in the addition of a carboxymethylaminomethyl (cmnm) group at the wobble position (U34) of certain tRNAs, forming tRNA-cmnm(5)s(2)U34. This is tRNA uridine 5-carboxymethylaminomethyl modification enzyme MnmG from Streptococcus pyogenes serotype M18 (strain MGAS8232).